Reading from the N-terminus, the 545-residue chain is Reticulon-2 (545 aa).

Disordered regions lie at residues 1–183 (MGQV…ETGE) and 199–250 (SPEV…EREP). A compositionally biased stretch (low complexity) spans 14–25 (APSTASSTPDST). Basic and acidic residues predominate over residues 32–43 (SDFRELHTAREF). Ser-44 carries the phosphoserine modification. Over residues 135–146 (RPLEDLRLRLDH) the composition is skewed to basic and acidic residues. A compositionally biased stretch (low complexity) spans 157 to 166 (GEDSSTSSST). Residues 199-230 (SPEVLTPQLSPGSGTPQAGTPSPSRSRDSNSG) show a composition bias toward polar residues. Residues Ser-227 and Ser-229 each carry the phosphoserine modification. The Reticulon domain maps to 345-545 (VADLLYWKDT…AVSGSKAKAE (201 aa)). Transmembrane regions (helical) follow at residues 368-388 (LLCL…LLLL) and 463-483 (LLFY…LLIL).

In terms of assembly, interacts with isoform 1 but not isoform 3 of SPAST. Interacts with BACE1. Interacts (via first transmembrane domain) with ARL6IP5/GTRAP3-18. Interacts (via N-terminus) with SLC1A1/EAAC1; the interaction promotes cell surface expression of SLC1A1. Interacts with TMEM33. Highly expressed in skeletal muscle.

Its subcellular location is the endoplasmic reticulum membrane. It localises to the sarcoplasmic reticulum membrane. The protein resides in the cell membrane. The protein localises to the sarcolemma. It is found in the T-tubule. Its subcellular location is the cytoplasm. It localises to the myofibril. The protein resides in the sarcomere. The protein localises to the z line. It is found in the cytoskeleton. In terms of biological role, inhibits amyloid precursor protein processing, probably by blocking BACE1 activity. Enhances trafficking of the glutamate transporter SLC1A1/EAAC1 from the endoplasmic reticulum to the cell surface. Plays a role in the translocation of SLC2A4/GLUT4 from intracellular membranes to the cell membrane which facilitates the uptake of glucose into the cell. The protein is Reticulon-2 (RTN2) of Homo sapiens (Human).